The primary structure comprises 303 residues: DCN1-like protein 3 (303 aa).

2 disordered regions span residues 1–41 (MGQC…HLSI) and 62–83 (EASQPLAAGGDTKKKEQGTGAE). The N-myristoyl glycine moiety is linked to residue Gly-2. Residues 85–277 (SSVQRIEELF…LFDTFVEWEM (193 aa)) enclose the DCUN1 domain. Positions 284-303 (EETKCIPCSGTDDQSTEGQT) are disordered. A compositionally biased stretch (polar residues) spans 294–303 (TDDQSTEGQT).

In terms of assembly, may interact (via the DCUN1 domain) with unneddylated cullins.

The protein localises to the cell membrane. The protein resides in the cytoplasm. Its subcellular location is the nucleus. It is found in the perinuclear region. Functionally, contributes to the neddylation of all cullins by transferring NEDD8 from N-terminally acetylated NEDD8-conjugating E2s enzyme to different cullin C-terminal domain-RBX complexes. At the cell membrane, can promote and as well inhibit cullins neddylation. In Xenopus tropicalis (Western clawed frog), this protein is DCN1-like protein 3.